A 346-amino-acid chain; its full sequence is NADH-ubiquinone oxidoreductase chain 2 (346 aa).

11 consecutive transmembrane segments (helical) span residues 1–21, 26–46, 60–80, 96–116, 122–142, 151–171, 178–198, 199–219, 242–262, 274–294, and 320–340; these read MSPY…MLIS, WVFM…ILVW, FIVQ…SLSG, MMIM…YWVV, LNYI…LAVL, SSML…GGLG, LLAF…VAGS, LLGL…FSIL, VLLG…GFFG, LLLG…FYYL, and LSGL…LVGG.

Belongs to the complex I subunit 2 family.

The protein resides in the mitochondrion inner membrane. It catalyses the reaction a ubiquinone + NADH + 5 H(+)(in) = a ubiquinol + NAD(+) + 4 H(+)(out). Functionally, core subunit of the mitochondrial membrane respiratory chain NADH dehydrogenase (Complex I) that is believed to belong to the minimal assembly required for catalysis. Complex I functions in the transfer of electrons from NADH to the respiratory chain. The immediate electron acceptor for the enzyme is believed to be ubiquinone. This is NADH-ubiquinone oxidoreductase chain 2 (ND2) from Branchiostoma lanceolatum (Common lancelet).